A 242-amino-acid polypeptide reads, in one-letter code: Small ribosomal subunit protein uS2 (242 aa).

Belongs to the universal ribosomal protein uS2 family.

In Idiomarina loihiensis (strain ATCC BAA-735 / DSM 15497 / L2-TR), this protein is Small ribosomal subunit protein uS2.